The chain runs to 69 residues: Putative membrane protein insertion efficiency factor (69 aa).

This sequence belongs to the UPF0161 family.

The protein resides in the cell inner membrane. Functionally, could be involved in insertion of integral membrane proteins into the membrane. The chain is Putative membrane protein insertion efficiency factor from Magnetococcus marinus (strain ATCC BAA-1437 / JCM 17883 / MC-1).